Here is a 391-residue protein sequence, read N- to C-terminus: Origin recognition complex subunit 2 (391 aa).

Positions 1-43 are disordered; sequence MEEYTDSGEDKNVYSDDDNDYFTASTQNNRTSKNTDSSPLDPK. Over residues 22–38 the composition is skewed to polar residues; it reads FTASTQNNRTSKNTDSS.

Belongs to the ORC2 family. In terms of assembly, ORC is composed of six subunits.

The protein resides in the nucleus. Functionally, component of the origin recognition complex (ORC) that binds origins of replication. DNA-binding is ATP-dependent, however specific DNA sequences that define origins of replication have not been identified so far. ORC is required to assemble the pre-replication complex necessary to initiate DNA replication. The polypeptide is Origin recognition complex subunit 2 (orcB) (Dictyostelium discoideum (Social amoeba)).